The primary structure comprises 284 residues: Nucleotide-binding protein Teth39_0666 (284 aa).

8-15 lines the ATP pocket; it reads GLSGAGKT. 58–61 is a GTP binding site; that stretch reads DLRG.

It belongs to the RapZ-like family.

Its function is as follows. Displays ATPase and GTPase activities. The polypeptide is Nucleotide-binding protein Teth39_0666 (Thermoanaerobacter pseudethanolicus (strain ATCC 33223 / 39E) (Clostridium thermohydrosulfuricum)).